A 463-amino-acid polypeptide reads, in one-letter code: Quinolone resistance protein NorB (463 aa).

Transmembrane regions (helical) follow at residues 17–37 (IGIV…VNVV), 53–73 (IAVS…GGLA), 86–106 (IILN…LLLI), 107–127 (IGRL…LSII), 142–162 (YWSI…GAVA), 165–185 (LGWR…LFLI), 201–221 (FDIK…ILIT), 230–250 (SLLF…FIVL), 273–293 (TASN…NTFV), 299–319 (YSSL…LIMI), 334–354 (PMLI…LTFL), 357–377 (IFYV…LGIY), 403–423 (MASA…YAIV), and 435–455 (IALW…LLLV).

The protein belongs to the major facilitator superfamily. TCR/Tet family.

It is found in the cell membrane. Multidrug efflux pump that acts independently of NorA and is one of the factors that confers resistance against diverse quinolones and chemical compounds. The polypeptide is Quinolone resistance protein NorB (norB) (Staphylococcus aureus (strain COL)).